A 187-amino-acid chain; its full sequence is Peptidyl-tRNA hydrolase (187 aa).

Y15 contributes to the tRNA binding site. H20 acts as the Proton acceptor in catalysis. Residues Y64, N66, and N112 each coordinate tRNA.

It belongs to the PTH family. In terms of assembly, monomer.

The protein resides in the cytoplasm. The catalysed reaction is an N-acyl-L-alpha-aminoacyl-tRNA + H2O = an N-acyl-L-amino acid + a tRNA + H(+). In terms of biological role, hydrolyzes ribosome-free peptidyl-tRNAs (with 1 or more amino acids incorporated), which drop off the ribosome during protein synthesis, or as a result of ribosome stalling. Its function is as follows. Catalyzes the release of premature peptidyl moieties from peptidyl-tRNA molecules trapped in stalled 50S ribosomal subunits, and thus maintains levels of free tRNAs and 50S ribosomes. The sequence is that of Peptidyl-tRNA hydrolase from Phocaeicola vulgatus (strain ATCC 8482 / DSM 1447 / JCM 5826 / CCUG 4940 / NBRC 14291 / NCTC 11154) (Bacteroides vulgatus).